Reading from the N-terminus, the 1169-residue chain is MRKKQKLPFDKLAIALMSTSILLNAQSDIKANTVTEDTPATEQAVEVPQQTAVSEEAPSSSSKETNPPQTPDDAEETVADKANDLAPQAPAKTADIPATSKETIRDLNDPSHVKTLQEKAGKGAGTVVAVIDAGFDKNHEAWRLTDKSKARYQSKEDLEKAKKDHGITYGEWVNDKVAYYHDYSKDGKTAVDQEHGTHVSGILSGNAPSETKEPYRLEGAMPEAQLLLMRVEIVNGLADYARNYAQAIRDAVNLGAKVINMSFGNAALAYANLPDETKKAFDYAKSKGVSIVTSAGNDSSFGGKTRLPLADHPDYGVVGTPAAADSTLTVASYSPDKQLTETATVKTADQQDKEMPVLSTNRFEPNKAYDYAYANRGTKEDDFKDVKGKIALIERGDIDFKDKIANAKKAGAVGVLIYDNQDKGFPIELPNVDQMPAAFISRKDGLLLKDNSKKTITFNATPKVLPTASGTKLSRFSSWGLTADGNIKPDIAAPGQDILSSVANNKYAKLSGTSMSAPLVAGIMGLLQKQYETQYPDMTPSERLDLAKKVLMSSATALYDEDEKAYFSPRQQGAGAVDAKKASAATMYVTDKDNTSSKVHLNNVSDKFEVTVTVHNKSDKPQELYYQATVQTDKVDGKHFALAPKALYETSWQKITIPANSSKQVTVPIDASRFSKDLLAQMKNGYFLEGFVRFKQDPTKEELMSIPYIGFRGDFGNLSALEKPIYDSKDGSSYYHEANSDAKDQLDGDGLQFYALKNNFTALTTESNPWTIIKAVKEGVENIEDIESSEITETIFAGTFAKQDDDSHYYIHRHANGKPYAAISPNGDGNRDYVQFQGTFLRNAKNLVAEVLDKEGDVVWTSEVTEQVVKNYNNDLASTLGSTRFEKTRWDGKDKDGKVVANGTYTYRVRYTPISSGAKEQHTDFDVIVDNTTPEAATSATFSAEDRRLTLASKPKTSQPVYRERIAYTYMDEDLPTTEYISPNEDGTFTLPEEAETMEGATVPLKMSDFTYVVEDMAGNITYTPVTNLLEGHSNKPEQDGSDQVPDKTPETKPEQDGSGQAPDKKPEAKPEQDGSGQAPDKKPETKPEKDSSGQTPGKTPQKGQPSRTLEKRSSKRALATKASARDQLPTTNDKDTNRLHLLKLVMTTFFFGLVAHIFKTKRQKETKK.

A signal peptide spans 1 to 31 (MRKKQKLPFDKLAIALMSTSILLNAQSDIKA). A disordered region spans residues 33–111 (TVTEDTPATE…ETIRDLNDPS (79 aa)). Positions 48 to 67 (PQQTAVSEEAPSSSSKETNP) are enriched in polar residues. Residues 101–583 (KETIRDLNDP…AGAVDAKKAS (483 aa)) form the Peptidase S8 domain. The span at 102–111 (ETIRDLNDPS) shows a compositional bias: basic and acidic residues. Residues Asp-132, His-195, and Ser-514 each act as charge relay system in the active site. The interval 1028–1135 (NLLEGHSNKP…RDQLPTTNDK (108 aa)) is disordered. Basic and acidic residues-rich tracts occupy residues 1033–1056 (HSNKPEQDGSDQVPDKTPETKPEQ), 1063–1073 (PDKKPEAKPEQ), and 1080–1092 (PDKKPETKPEKDS). Tandem repeats lie at residues 1036 to 1052 (KPEQDGSDQVPDKTPET), 1053 to 1069 (KPEQDGSGQAPDKKPEA), 1070 to 1086 (KPEQDGSGQAPDKKPET), and 1087 to 1103 (KPEKDSSGQTPGKTPQK). Positions 1036-1103 (KPEQDGSDQV…GQTPGKTPQK (68 aa)) are 4 X 17 AA tandem repeats. The span at 1093–1108 (SGQTPGKTPQKGQPSR) shows a compositional bias: polar residues. The short motif at 1129–1133 (LPTTN) is the LPXTG sorting signal element. Pentaglycyl murein peptidoglycan amidated threonine is present on Thr-1132. The propeptide at 1133–1169 (NDKDTNRLHLLKLVMTTFFFGLVAHIFKTKRQKETKK) is removed by sortase.

Belongs to the peptidase S8 family. Cleaved by SpeB protease; leading to its degradation. Degradation by SpeB is probably strictly regulated to preserve integrity of C5a peptidase.

The protein resides in the secreted. It is found in the cell wall. The enzyme catalyses The primary cleavage site is at 67-His-|-Lys-68 in human C5a with a minor secondary cleavage site at 58-Ala-|-Ser-59.. In terms of biological role, this virulence factor of S.pyogenes specifically cleaves the human serum chemotaxin C5a at '68-Lys-|-Asp-69' bond near its C-terminus, destroying its ability to serve as a chemoattractant. This chain is C5a peptidase (scpA), found in Streptococcus pyogenes serotype M3 (strain ATCC BAA-595 / MGAS315).